The chain runs to 266 residues: Orcokinin peptides type B (266 aa).

The first 20 residues, 1 to 20 (MTAQMFTIALLLSLSAIAAA), serve as a signal peptide directing secretion. 3 propeptides span residues 21 to 46 (GTIK…GAPV), 240 to 246 (DYDVFPD), and 264 to 266 (NVE).

It belongs to the orcokinin family.

Its subcellular location is the secreted. Its function is as follows. Myotropic peptides that enhance both the frequency and amplitude of spontaneous hindgut contractions. The sequence is that of Orcokinin peptides type B from Procambarus clarkii (Red swamp crayfish).